The primary structure comprises 269 residues: MGSLANNIMVVGAVLAALVAGGSCGPPKVPPGPNITTNYNGKWLTARATWYGQPNGAGAPDNGGACGIKNVNLPPYSGMTACGNVPIFKDGKGCGSCYEVRCKEKPECSGNPVTVYITDMNYEPIAPYHFDLSGKAFGSLAKPGLNDKIRHCGIMDVEFRRVRCKYPAGQKIVFHIEKGCNPNYLAVLVKYVADDGDIVLMEIQDKLSAEWKPMKLSWGAIWRMDTAKALKGPFSIRLTSESGKKVIAKDVIPANWRPDAVYTSNVQFY.

The first 24 residues, 1–24, serve as a signal peptide directing secretion; sequence MGSLANNIMVVGAVLAALVAGGSC. Asparagine 34 carries an N-linked (GlcNAc...) asparagine glycan. The Expansin-like EG45 domain occupies 63-169; sequence GGACGIKNVN…RRVRCKYPAG (107 aa). Cystine bridges form between cysteine 66-cysteine 94, cysteine 97-cysteine 164, and cysteine 102-cysteine 108. In terms of domain architecture, Expansin-like CBD spans 183 to 264; sequence NYLAVLVKYV…NWRPDAVYTS (82 aa).

The protein belongs to the expansin family. Expansin B subfamily. As to expression, expressed in anthers and pollen.

The protein localises to the secreted. Its subcellular location is the cell wall. The protein resides in the membrane. Its function is as follows. May aid fertilization by loosening the cell wall of the stigma and style, thereby facilitating penetration of the pollen tube. Acts selectively on grass cell walls, which are relatively poor in pectins and xyloglucans and rich in glucuronoarabinoxylans and (1-3),(1-4)-beta-D-glucans, when compared with cell walls of other angiosperms, including other monocots. The sequence is that of Expansin-B1 (EXPB1) from Zea mays (Maize).